A 164-amino-acid polypeptide reads, in one-letter code: Thiol peroxidase (164 aa).

Positions 17–162 (IKVGDTFPDF…YDEVLQAAQA (146 aa)) constitute a Thioredoxin domain. The active-site Cysteine sulfenic acid (-SOH) intermediate is the cysteine 58. Cysteines 58 and 92 form a disulfide.

The protein belongs to the peroxiredoxin family. Tpx subfamily. In terms of assembly, homodimer.

It carries out the reaction a hydroperoxide + [thioredoxin]-dithiol = an alcohol + [thioredoxin]-disulfide + H2O. Thiol-specific peroxidase that catalyzes the reduction of hydrogen peroxide and organic hydroperoxides to water and alcohols, respectively. Plays a role in cell protection against oxidative stress by detoxifying peroxides. The polypeptide is Thiol peroxidase (Clostridium acetobutylicum (strain ATCC 824 / DSM 792 / JCM 1419 / IAM 19013 / LMG 5710 / NBRC 13948 / NRRL B-527 / VKM B-1787 / 2291 / W)).